Consider the following 214-residue polypeptide: Riboflavin kinase (214 aa).

The segment at Met-1–Gly-27 is disordered. Positions 44 and 46 each coordinate Mg(2+). The Nucleophile role is filled by Glu-101.

It belongs to the flavokinase family. Zn(2+) serves as cofactor. Mg(2+) is required as a cofactor.

It carries out the reaction riboflavin + ATP = FMN + ADP + H(+). Its pathway is cofactor biosynthesis; FMN biosynthesis; FMN from riboflavin (ATP route): step 1/1. Its function is as follows. Catalyzes the phosphorylation of riboflavin (vitamin B2) to form flavin mononucleotide (FMN) coenzyme. The chain is Riboflavin kinase (fmn1) from Aspergillus niger (strain ATCC MYA-4892 / CBS 513.88 / FGSC A1513).